We begin with the raw amino-acid sequence, 659 residues long: Interferon-induced GTP-binding protein Mx1 (659 aa).

An N-acetylmethionine modification is found at M1. Residues 1-40 (MVNSKGEITDSDPGSNHLLLNGLPDKAGKNQDTEPENSLC) are disordered. Positions 65 to 338 (DLALPAIAVI…LITHICKTLP (274 aa)) constitute a Dynamin-type G domain. Positions 75-82 (GDQSSGKS) are G1 motif. Residue 75–82 (GDQSSGKS) coordinates GTP. The tract at residues 100 to 102 (VTR) is G2 motif. The segment at 176–179 (DLPG) is G3 motif. GTP-binding positions include 176–180 (DLPGI) and 245–248 (TKPD). Positions 245–248 (TKPD) are G4 motif. The tract at residues 277-280 (KCRG) is G5 motif. Residues 339-364 (LLENQIKENHEKITEELKKYGSDVPE) form a bundle signaling element (BSE) region. The tract at residues 364–531 (EEEHEKMFFL…HFQMEQIVYC (168 aa)) is middle domain. The segment at 365-629 (EEHEKMFFLI…KDTYNWLLKE (265 aa)) is stalk. Residues 552–555 (KNKK) are critical for lipid-binding. The GED domain occupies 571–659 (LSEIFEHLLA…ARRRLAKFPG (89 aa)).

It belongs to the TRAFAC class dynamin-like GTPase superfamily. Dynamin/Fzo/YdjA family. As to quaternary structure, homooligomer. Oligomerizes into multimeric filamentous or ring-like structures by virtue of its stalk domain. Oligomerization is critical for GTPase activity, protein stability, and recognition of viral target structures. Interacts with TRPC1, TRPC3, TRPC4, TRPC5, TRPC6 and TRPC7. Interacts with HSPA5. Interacts with TUBB/TUBB5. Interacts with DDX39A and DDX39B. In terms of processing, ISGylated.

It is found in the cytoplasm. Its subcellular location is the endoplasmic reticulum membrane. It localises to the perinuclear region. Functionally, interferon-induced dynamin-like GTPase with antiviral activity. This is Interferon-induced GTP-binding protein Mx1 (MX1) from Phoca vitulina (Harbor seal).